We begin with the raw amino-acid sequence, 431 residues long: tRNA(Ile)-lysidine synthase (431 aa).

19–24 (STGIDS) provides a ligand contact to ATP.

It belongs to the tRNA(Ile)-lysidine synthase family.

Its subcellular location is the cytoplasm. It catalyses the reaction cytidine(34) in tRNA(Ile2) + L-lysine + ATP = lysidine(34) in tRNA(Ile2) + AMP + diphosphate + H(+). In terms of biological role, ligates lysine onto the cytidine present at position 34 of the AUA codon-specific tRNA(Ile) that contains the anticodon CAU, in an ATP-dependent manner. Cytidine is converted to lysidine, thus changing the amino acid specificity of the tRNA from methionine to isoleucine. The polypeptide is tRNA(Ile)-lysidine synthase (Staphylococcus aureus (strain Mu50 / ATCC 700699)).